Reading from the N-terminus, the 411-residue chain is Lissencephaly-1 homolog (411 aa).

Residues 9–41 (QREELNQAIADYLGSNGYADSLETFRKEADLST) form the LisH domain. A coiled-coil region spans residues 56 to 83 (TSVIRLQKKVMELEAKLTEAEKEVIEGA). WD repeat units lie at residues 106–147 (GHRA…RSLK), 148–187 (GHTDSVQDVAFDAQGKLLASCSADLSIKLWDFQQSYECIK), 191–230 (GHDHNVSSVAFVPAGDYVLSASRDRTIKMWEVATGYCVKT), 233–272 (GHREWVRMVRVHIEGSIFATCSNDQTIRVWLTNSKDCKVE), 275–334 (DHEH…CLLT), 337–376 (GHDNWVRGLAFHPGGKYLVSASDDKTIRVWDLRNKRCMKT), and 379–411 (AHQHFCTSIDFHKAHPYVISGSVDQTVKVWECR).

This sequence belongs to the WD repeat LIS1/nudF family.

It localises to the cytoplasm. The protein resides in the cytoskeleton. It is found in the microtubule organizing center. The protein localises to the centrosome. Its function is as follows. Positively regulates the activity of the minus-end directed microtubule motor protein dynein. May enhance dynein-mediated microtubule sliding by targeting dynein to the microtubule plus end. Required for several dynein- and microtubule-dependent processes. The polypeptide is Lissencephaly-1 homolog (Drosophila sechellia (Fruit fly)).